Here is a 120-residue protein sequence, read N- to C-terminus: MLNLDNQKAIDNLHQSFIKSDLPKIQIGDTLKLGIKIIEGNKERVQFYEGTVIAKKNSSINTTITVRKVLQGIGIERIFLIHSPKVASIEVIRHAKVRRSKLYYLRNLRGKASRLKQRFE.

Belongs to the bacterial ribosomal protein bL19 family.

Its subcellular location is the plastid. It is found in the chloroplast. This is Large ribosomal subunit protein bL19c from Thalassiosira pseudonana (Marine diatom).